Here is a 609-residue protein sequence, read N- to C-terminus: Putative transcriptional regulatory protein y4pA (609 aa).

The 221-residue stretch at 313 to 533 (IVGRSPSIQQ…LRSVLETAAI (221 aa)) folds into the Sigma-54 factor interaction domain. 395-404 (HPKATLLIES) is a binding site for ATP. Residues 578–597 (RGEAARYLGISRKTLYNKMR) constitute a DNA-binding region (H-T-H motif).

In terms of biological role, probable transcriptional regulator that acts in conjunction with sigma-54. The chain is Putative transcriptional regulatory protein y4pA from Sinorhizobium fredii (strain NBRC 101917 / NGR234).